Here is a 496-residue protein sequence, read N- to C-terminus: Solute carrier family 2, facilitated glucose transporter member 3 (496 aa).

Residues 1–10 are Cytoplasmic-facing; it reads MGTQKVTPAL. A helical membrane pass occupies residues 11–32; that stretch reads IFAITVATIGSFQFGYNTGVIN. Residues 33–64 lie on the Extracellular side of the membrane; the sequence is APEKIIKEFINKTLTDKGNAPPSEVLLTSLWS. A glycan (N-linked (GlcNAc...) asparagine) is linked at Asn43. A helical transmembrane segment spans residues 65–85; that stretch reads LSVAIFSVGGMIGSFSVGLFV. Over 86–90 the chain is Cytoplasmic; sequence NRFGR. A helical membrane pass occupies residues 91–111; that stretch reads RNSMLIVNLLAVTGGCFMGLC. The Extracellular portion of the chain corresponds to 112–118; the sequence is KVAKSVE. Residues 119 to 142 traverse the membrane as a helical segment; the sequence is MLILGRLVIGLFCGLCTGFVPMYI. The Cytoplasmic segment spans residues 143 to 153; that stretch reads GEISPTALRGA. A helical transmembrane segment spans residues 154–174; the sequence is FGTLNQLGIVVGILVAQIFGL. Gln159 provides a ligand contact to D-glucose. Over 175–183 the chain is Extracellular; the sequence is EFILGSEEL. The chain crosses the membrane as a helical span at residues 184 to 204; the sequence is WPLLLGFTILPAILQSAALPF. Over 205–269 the chain is Cytoplasmic; that stretch reads CPESPRFLLI…LFRVSSYRQP (65 aa). Phosphothreonine is present on Thr232. A helical membrane pass occupies residues 270–290; sequence IIISIVLQLSQQLSGINAVFY. The segment at 277-279 is important for selectivity against fructose; sequence QLS. Residues 280–281 and Asn286 each bind D-glucose; that span reads QQ. Over 291–304 the chain is Extracellular; the sequence is YSTGIFKDAGVQEP. The helical transmembrane segment at 305–325 threads the bilayer; the sequence is IYATIGAGVVNTIFTVVSLFL. Asn315 provides a ligand contact to D-glucose. Topologically, residues 326-331 are cytoplasmic; that stretch reads VERAGR. A helical transmembrane segment spans residues 332-352; it reads RTLHMIGLGGMAFCSTLMTVS. The Extracellular segment spans residues 353-363; that stretch reads LLLKDNYNGMS. Residues 364–389 form a helical membrane-spanning segment; that stretch reads FVCIGAILVFVAFFEIGPGPIPWFIV. D-glucose contacts are provided by Glu378 and Trp386. The Cytoplasmic segment spans residues 390-399; it reads AELFSQGPRP. A helical membrane pass occupies residues 400 to 420; that stretch reads AAMAVAGCSNWTSNFLVGLLF. The Extracellular segment spans residues 421-429; it reads PSAAHYLGA. Residues 430 to 450 traverse the membrane as a helical segment; it reads YVFIIFTGFLITFLAFTFFKV. The Cytoplasmic portion of the chain corresponds to 451 to 496; sequence PETRGRTFEDITRAFEGQAHGADRSGKDGVMEMNSIEPAKETTTNV. A phosphoserine mark is found at Ser475 and Ser485. Position 492 is a phosphothreonine (Thr492).

It belongs to the major facilitator superfamily. Sugar transporter (TC 2.A.1.1) family. Glucose transporter subfamily. As to quaternary structure, interacts with SMIM43; the interaction may promote SLC2A3-mediated glucose transport to meet the energy needs of mesendoderm differentiation. As to expression, highly expressed in brain. Expressed in many tissues.

It localises to the cell membrane. The protein resides in the perikaryon. Its subcellular location is the cell projection. It catalyses the reaction D-glucose(out) = D-glucose(in). The catalysed reaction is D-galactose(in) = D-galactose(out). Its activity is regulated as follows. Deoxyglucose transport is inhibited by D-glucose, D-galactose and maltose. Galactose transport is inhibited by D-glucose and maltose. Facilitative glucose transporter. Can also mediate the uptake of various other monosaccharides across the cell membrane. Mediates the uptake of glucose, 2-deoxyglucose, galactose, mannose, xylose and fucose, and probably also dehydroascorbate. Does not mediate fructose transport. Required for mesendoderm differentiation. This chain is Solute carrier family 2, facilitated glucose transporter member 3, found in Homo sapiens (Human).